We begin with the raw amino-acid sequence, 137 residues long: S-adenosylmethionine decarboxylase proenzyme (137 aa).

S63 acts as the Schiff-base intermediate with substrate; via pyruvic acid in catalysis. At S63 the chain carries Pyruvic acid (Ser); by autocatalysis. The Proton acceptor; for processing activity role is filled by H68. The active-site Proton donor; for catalytic activity is the C83.

It belongs to the prokaryotic AdoMetDC family. Type 1 subfamily. Heterotetramer of two alpha and two beta chains arranged as a dimer of alpha/beta heterodimers. It depends on pyruvate as a cofactor. Is synthesized initially as an inactive proenzyme. Formation of the active enzyme involves a self-maturation process in which the active site pyruvoyl group is generated from an internal serine residue via an autocatalytic post-translational modification. Two non-identical subunits are generated from the proenzyme in this reaction, and the pyruvate is formed at the N-terminus of the alpha chain, which is derived from the carboxyl end of the proenzyme. The post-translation cleavage follows an unusual pathway, termed non-hydrolytic serinolysis, in which the side chain hydroxyl group of the serine supplies its oxygen atom to form the C-terminus of the beta chain, while the remainder of the serine residue undergoes an oxidative deamination to produce ammonia and the pyruvoyl group blocking the N-terminus of the alpha chain.

The catalysed reaction is S-adenosyl-L-methionine + H(+) = S-adenosyl 3-(methylsulfanyl)propylamine + CO2. It participates in amine and polyamine biosynthesis; S-adenosylmethioninamine biosynthesis; S-adenosylmethioninamine from S-adenosyl-L-methionine: step 1/1. Its function is as follows. Catalyzes the decarboxylation of S-adenosylmethionine to S-adenosylmethioninamine (dcAdoMet), the propylamine donor required for the synthesis of the polyamines spermine and spermidine from the diamine putrescine. The protein is S-adenosylmethionine decarboxylase proenzyme of Fervidobacterium nodosum (strain ATCC 35602 / DSM 5306 / Rt17-B1).